The primary structure comprises 278 residues: MAGEFRWQAGRPATAQVGGWVLAHCQQRFLQDDNGLLFPREWLKRQELPLLAEHGVGHWQGEPVYVLELDEPIELPGMAWAPLRQFMLHGDFDQFCMLGYASQIGIWARHNRFCGNCGTRMQAQDHERVMQCPQCGLHQYPRLSPSMIVLVTRGDEVLLARSPRFVPGVYSTLAGFVEAGESVEQCVVREVREEVGVEVANLEYIGSQNWPFPHSLMLGFHAEYVSGEIVPQEDEIEDAQWFSLDALPPLPAQRSIARHLIDLYLARRSGAAEPVLPG.

Arg84 contributes to the substrate binding site. Positions 114 and 117 each coordinate Zn(2+). Substrate is bound at residue Glu127. 2 residues coordinate Zn(2+): Cys132 and Cys135. Tyr140 contributes to the substrate binding site. Residues 141-265 (PRLSPSMIVL…IARHLIDLYL (125 aa)) form the Nudix hydrolase domain. A divalent metal cation is bound by residues Ala174, Glu190, and Glu194. The Nudix box motif lies at 175–196 (GFVEAGESVEQCVVREVREEVG). Residue 208–215 (QNWPFPHS) coordinates substrate. Glu235 provides a ligand contact to a divalent metal cation. Position 257 (Ala257) interacts with substrate.

The protein belongs to the Nudix hydrolase family. NudC subfamily. In terms of assembly, homodimer. Mg(2+) is required as a cofactor. The cofactor is Mn(2+). It depends on Zn(2+) as a cofactor.

The enzyme catalyses a 5'-end NAD(+)-phospho-ribonucleoside in mRNA + H2O = a 5'-end phospho-adenosine-phospho-ribonucleoside in mRNA + beta-nicotinamide D-ribonucleotide + 2 H(+). It carries out the reaction NAD(+) + H2O = beta-nicotinamide D-ribonucleotide + AMP + 2 H(+). The catalysed reaction is NADH + H2O = reduced beta-nicotinamide D-ribonucleotide + AMP + 2 H(+). Functionally, mRNA decapping enzyme that specifically removes the nicotinamide adenine dinucleotide (NAD) cap from a subset of mRNAs by hydrolyzing the diphosphate linkage to produce nicotinamide mononucleotide (NMN) and 5' monophosphate mRNA. The NAD-cap is present at the 5'-end of some mRNAs and stabilizes RNA against 5'-processing. Has preference for mRNAs with a 5'-end purine. Catalyzes the hydrolysis of a broad range of dinucleotide pyrophosphates. In Pseudomonas aeruginosa (strain ATCC 15692 / DSM 22644 / CIP 104116 / JCM 14847 / LMG 12228 / 1C / PRS 101 / PAO1), this protein is NAD-capped RNA hydrolase NudC.